The following is a 419-amino-acid chain: L-cysteine:1D-myo-inositol 2-amino-2-deoxy-alpha-D-glucopyranoside ligase (419 aa).

The interval 1–20 (MRSWSVPEVPALPGRGPRVH) is disordered. Cys44 lines the Zn(2+) pocket. Residues 44 to 47 (CGIT), Thr59, and 82 to 84 (NVT) contribute to the L-cysteinyl-5'-AMP site. The short motif at 46–56 (ITPYDATHLGH) is the 'HIGH' region element. A 'ERGGDP' region motif is present at residues 191–196 (ERGGDP). An L-cysteinyl-5'-AMP-binding site is contributed by Trp232. Cys236 contacts Zn(2+). Residue 254-256 (GSD) coordinates L-cysteinyl-5'-AMP. His261 provides a ligand contact to Zn(2+). Val289 contacts L-cysteinyl-5'-AMP. The 'KMSKS' region signature appears at 295 to 299 (KMSKS).

The protein belongs to the class-I aminoacyl-tRNA synthetase family. MshC subfamily. As to quaternary structure, monomer. It depends on Zn(2+) as a cofactor.

It carries out the reaction 1D-myo-inositol 2-amino-2-deoxy-alpha-D-glucopyranoside + L-cysteine + ATP = 1D-myo-inositol 2-(L-cysteinylamino)-2-deoxy-alpha-D-glucopyranoside + AMP + diphosphate + H(+). Catalyzes the ATP-dependent condensation of GlcN-Ins and L-cysteine to form L-Cys-GlcN-Ins. This Kineococcus radiotolerans (strain ATCC BAA-149 / DSM 14245 / SRS30216) protein is L-cysteine:1D-myo-inositol 2-amino-2-deoxy-alpha-D-glucopyranoside ligase.